The sequence spans 288 residues: Homoserine kinase (288 aa).

Residue 79–89 (PPARGLGSSSA) participates in ATP binding.

This sequence belongs to the GHMP kinase family. Homoserine kinase subfamily.

It localises to the cytoplasm. The enzyme catalyses L-homoserine + ATP = O-phospho-L-homoserine + ADP + H(+). The protein operates within amino-acid biosynthesis; L-threonine biosynthesis; L-threonine from L-aspartate: step 4/5. Catalyzes the ATP-dependent phosphorylation of L-homoserine to L-homoserine phosphate. The sequence is that of Homoserine kinase from Listeria welshimeri serovar 6b (strain ATCC 35897 / DSM 20650 / CCUG 15529 / CIP 8149 / NCTC 11857 / SLCC 5334 / V8).